The chain runs to 340 residues: Phosphoribosylformylglycinamidine cyclo-ligase (340 aa).

This sequence belongs to the AIR synthase family.

The protein resides in the cytoplasm. The enzyme catalyses 2-formamido-N(1)-(5-O-phospho-beta-D-ribosyl)acetamidine + ATP = 5-amino-1-(5-phospho-beta-D-ribosyl)imidazole + ADP + phosphate + H(+). Its pathway is purine metabolism; IMP biosynthesis via de novo pathway; 5-amino-1-(5-phospho-D-ribosyl)imidazole from N(2)-formyl-N(1)-(5-phospho-D-ribosyl)glycinamide: step 2/2. The protein is Phosphoribosylformylglycinamidine cyclo-ligase of Streptococcus gordonii (strain Challis / ATCC 35105 / BCRC 15272 / CH1 / DL1 / V288).